We begin with the raw amino-acid sequence, 103 residues long: Pyrimidine/purine nucleoside phosphorylase (103 aa).

The protein belongs to the nucleoside phosphorylase PpnP family.

The catalysed reaction is a purine D-ribonucleoside + phosphate = a purine nucleobase + alpha-D-ribose 1-phosphate. The enzyme catalyses adenosine + phosphate = alpha-D-ribose 1-phosphate + adenine. It catalyses the reaction cytidine + phosphate = cytosine + alpha-D-ribose 1-phosphate. It carries out the reaction guanosine + phosphate = alpha-D-ribose 1-phosphate + guanine. The catalysed reaction is inosine + phosphate = alpha-D-ribose 1-phosphate + hypoxanthine. The enzyme catalyses thymidine + phosphate = 2-deoxy-alpha-D-ribose 1-phosphate + thymine. It catalyses the reaction uridine + phosphate = alpha-D-ribose 1-phosphate + uracil. It carries out the reaction xanthosine + phosphate = alpha-D-ribose 1-phosphate + xanthine. Its function is as follows. Catalyzes the phosphorolysis of diverse nucleosides, yielding D-ribose 1-phosphate and the respective free bases. Can use uridine, adenosine, guanosine, cytidine, thymidine, inosine and xanthosine as substrates. Also catalyzes the reverse reactions. The chain is Pyrimidine/purine nucleoside phosphorylase from Methylococcus capsulatus (strain ATCC 33009 / NCIMB 11132 / Bath).